The primary structure comprises 39 residues: uncharacterized protein (39 aa).

This sequence belongs to the orthopoxvirus A30.5 protein family.

This is an uncharacterized protein from Bos taurus (Bovine).